The following is a 247-amino-acid chain: Protein NipSnap homolog 3B (247 aa).

K45 and K57 each carry N6-succinyllysine.

Belongs to the NipSnap family.

The polypeptide is Protein NipSnap homolog 3B (NIPSNAP3B) (Homo sapiens (Human)).